Reading from the N-terminus, the 504-residue chain is ATP synthase subunit alpha, chloroplastic (504 aa).

An ATP-binding site is contributed by 170–177; the sequence is GDRQTGKT.

Belongs to the ATPase alpha/beta chains family. In terms of assembly, F-type ATPases have 2 components, CF(1) - the catalytic core - and CF(0) - the membrane proton channel. CF(1) has five subunits: alpha(3), beta(3), gamma(1), delta(1), epsilon(1). CF(0) has four main subunits: a, b, b' and c.

The protein localises to the plastid. The protein resides in the chloroplast thylakoid membrane. It carries out the reaction ATP + H2O + 4 H(+)(in) = ADP + phosphate + 5 H(+)(out). In terms of biological role, produces ATP from ADP in the presence of a proton gradient across the membrane. The alpha chain is a regulatory subunit. This Hordeum vulgare (Barley) protein is ATP synthase subunit alpha, chloroplastic.